Consider the following 383-residue polypeptide: Acetyl-CoA acetyltransferase (383 aa).

The active-site Acyl-thioester intermediate is C85. Residues C206, S207, I209, and K328 each contribute to the CoA site. The active-site Proton acceptor is H332.

Belongs to the thiolase-like superfamily. Thiolase family. In terms of assembly, interacts with HMG-CoA synthase (HMGCS) that catalyzes the second step in the pathway and with a DUF35 protein. The acetoacetyl-CoA thiolase/HMG-CoA synthase complex channels the intermediate via a fused CoA-binding site, which allows for efficient coupling of the endergonic thiolase reaction with the exergonic HMGCS reaction.

It catalyses the reaction 2 acetyl-CoA = acetoacetyl-CoA + CoA. The protein operates within metabolic intermediate biosynthesis; (R)-mevalonate biosynthesis; (R)-mevalonate from acetyl-CoA: step 1/3. In terms of biological role, catalyzes the condensation of two acetyl-coA molecules into acetoacetyl-CoA. Functions in the mevalonate (MVA) pathway leading to isopentenyl diphosphate (IPP), a key precursor for the biosynthesis of isoprenoid compounds that are building blocks of archaeal membrane lipids. In Methanothermobacter thermautotrophicus (strain ATCC 29096 / DSM 1053 / JCM 10044 / NBRC 100330 / Delta H) (Methanobacterium thermoautotrophicum), this protein is Acetyl-CoA acetyltransferase.